The primary structure comprises 262 residues: Phosphatidylserine decarboxylase proenzyme (262 aa).

Residues Asp86, His142, and Ser226 each act as charge relay system; for autoendoproteolytic cleavage activity in the active site. Ser226 (schiff-base intermediate with substrate; via pyruvic acid; for decarboxylase activity) is an active-site residue. Position 226 is a pyruvic acid (Ser); by autocatalysis (Ser226).

This sequence belongs to the phosphatidylserine decarboxylase family. PSD-B subfamily. Prokaryotic type I sub-subfamily. In terms of assembly, heterodimer of a large membrane-associated beta subunit and a small pyruvoyl-containing alpha subunit. Pyruvate serves as cofactor. Is synthesized initially as an inactive proenzyme. Formation of the active enzyme involves a self-maturation process in which the active site pyruvoyl group is generated from an internal serine residue via an autocatalytic post-translational modification. Two non-identical subunits are generated from the proenzyme in this reaction, and the pyruvate is formed at the N-terminus of the alpha chain, which is derived from the carboxyl end of the proenzyme. The autoendoproteolytic cleavage occurs by a canonical serine protease mechanism, in which the side chain hydroxyl group of the serine supplies its oxygen atom to form the C-terminus of the beta chain, while the remainder of the serine residue undergoes an oxidative deamination to produce ammonia and the pyruvoyl prosthetic group on the alpha chain. During this reaction, the Ser that is part of the protease active site of the proenzyme becomes the pyruvoyl prosthetic group, which constitutes an essential element of the active site of the mature decarboxylase.

The protein resides in the cell membrane. It catalyses the reaction a 1,2-diacyl-sn-glycero-3-phospho-L-serine + H(+) = a 1,2-diacyl-sn-glycero-3-phosphoethanolamine + CO2. The protein operates within phospholipid metabolism; phosphatidylethanolamine biosynthesis; phosphatidylethanolamine from CDP-diacylglycerol: step 2/2. In terms of biological role, catalyzes the formation of phosphatidylethanolamine (PtdEtn) from phosphatidylserine (PtdSer). The sequence is that of Phosphatidylserine decarboxylase proenzyme from Bacillus thuringiensis subsp. konkukian (strain 97-27).